The primary structure comprises 218 residues: MNSVTVSHAPYTITYHDDWEPVMNQLVEFYNEVASWLLRDETSPIPDKFFIQLKQPLRNKRVCVCGIDPYPKDGTGVPFESPNFTKKSIKEIASSISRLTGVIDYKGYNLNIIDGVIPWNYYLSCKLGETKSHAIYWDKISKLLLHHITKHVSVLYCLGKTDFSNIRAKLESPVTTIVGYHPAARDRQFEKDRSFEIINVLLELDNKAPINWAQGFIY.

D68 acts as the Proton acceptor in catalysis.

The protein belongs to the uracil-DNA glycosylase (UDG) superfamily. UNG family. In terms of assembly, homodimer. Interacts with protein OPG148. Component of the Uracil-DNA glycosylase(UDG)-OPG148-polymerase complex; OPG148 and UDG form a heterodimeric processivity factor that associates with OPG71 to form the processive polymerase holoenzyme.

It catalyses the reaction Hydrolyzes single-stranded DNA or mismatched double-stranded DNA and polynucleotides, releasing free uracil.. Plays an essential role in viral replication as a component of the DNA polymerase processivity factor. Excises uracil residues from the DNA which can arise as a result of misincorporation of dUMP residues by DNA polymerase or due to deamination of cytosine. In Variola virus, this protein is Uracil-DNA glycosylase (OPG116).